Here is a 542-residue protein sequence, read N- to C-terminus: Chaperonin GroEL (542 aa).

ATP-binding positions include 29 to 32, 86 to 90, Gly-413, 476 to 478, and Asp-492; these read TLGP, DGTTT, and NAA. Residues 522–542 form a disordered region; it reads PDENGPAAVPDMGMGGMGGMM.

Belongs to the chaperonin (HSP60) family. In terms of assembly, forms a cylinder of 14 subunits composed of two heptameric rings stacked back-to-back. Interacts with the co-chaperonin GroES.

Its subcellular location is the cytoplasm. The catalysed reaction is ATP + H2O + a folded polypeptide = ADP + phosphate + an unfolded polypeptide.. Its function is as follows. Together with its co-chaperonin GroES, plays an essential role in assisting protein folding. The GroEL-GroES system forms a nano-cage that allows encapsulation of the non-native substrate proteins and provides a physical environment optimized to promote and accelerate protein folding. The chain is Chaperonin GroEL from Listeria monocytogenes serotype 4b (strain CLIP80459).